A 193-amino-acid chain; its full sequence is Holliday junction branch migration complex subunit RuvA (193 aa).

The interval 1–64 (MIGRIQGTLV…EDAQQLFGFA (64 aa)) is domain I. Positions 65 to 139 (TEIEREAFRQ…GKLAPDLGIT (75 aa)) are domain II. Positions 139 to 143 (TGGKP) are flexible linker. The domain III stretch occupies residues 144–193 (QAIEATSEVLQALLSLGYSEKEALLALKQIPPETSVSDGIRMGLKYLSKP).

It belongs to the RuvA family. In terms of assembly, homotetramer. Forms an RuvA(8)-RuvB(12)-Holliday junction (HJ) complex. HJ DNA is sandwiched between 2 RuvA tetramers; dsDNA enters through RuvA and exits via RuvB. An RuvB hexamer assembles on each DNA strand where it exits the tetramer. Each RuvB hexamer is contacted by two RuvA subunits (via domain III) on 2 adjacent RuvB subunits; this complex drives branch migration. In the full resolvosome a probable DNA-RuvA(4)-RuvB(12)-RuvC(2) complex forms which resolves the HJ.

It localises to the cytoplasm. Its function is as follows. The RuvA-RuvB-RuvC complex processes Holliday junction (HJ) DNA during genetic recombination and DNA repair, while the RuvA-RuvB complex plays an important role in the rescue of blocked DNA replication forks via replication fork reversal (RFR). RuvA specifically binds to HJ cruciform DNA, conferring on it an open structure. The RuvB hexamer acts as an ATP-dependent pump, pulling dsDNA into and through the RuvAB complex. HJ branch migration allows RuvC to scan DNA until it finds its consensus sequence, where it cleaves and resolves the cruciform DNA. This chain is Holliday junction branch migration complex subunit RuvA, found in Polynucleobacter asymbioticus (strain DSM 18221 / CIP 109841 / QLW-P1DMWA-1) (Polynucleobacter necessarius subsp. asymbioticus).